A 312-amino-acid chain; its full sequence is MNIMTANQGAVSPSQTESEASPPTFSHVPVLATEIVEALAPAPGKVFVDGTLGGAGHTRLLLGRGATVYGIDQDPYALDRARQAALPGLHVLQGNYRDMAELLPAAGVTQVDGILLDIGVSSFQLDDAGRGFSYHTEAPLDMRMSQSGESAADVVNDLDETELAALIYEYGEERHSRRIARFIVQAREKAPIETTVQLAEIIKRAYPGFSKGIHPARRTFQALRIYVNDELGALRDGLSAAEGLLAPGGRLAVISFHSLEDRIVKRFLLGSDVLTPLTKRPIVAAESEQVDNPRARSAKLRVGERAAAPEGS.

The tract at residues 1–24 is disordered; the sequence is MNIMTANQGAVSPSQTESEASPPT. Residues 55 to 57, D72, Y96, D117, and Q124 contribute to the S-adenosyl-L-methionine site; that span reads AGH. Residues 288-312 are disordered; that stretch reads EQVDNPRARSAKLRVGERAAAPEGS.

The protein belongs to the methyltransferase superfamily. RsmH family.

It is found in the cytoplasm. It carries out the reaction cytidine(1402) in 16S rRNA + S-adenosyl-L-methionine = N(4)-methylcytidine(1402) in 16S rRNA + S-adenosyl-L-homocysteine + H(+). Its function is as follows. Specifically methylates the N4 position of cytidine in position 1402 (C1402) of 16S rRNA. This Deinococcus radiodurans (strain ATCC 13939 / DSM 20539 / JCM 16871 / CCUG 27074 / LMG 4051 / NBRC 15346 / NCIMB 9279 / VKM B-1422 / R1) protein is Ribosomal RNA small subunit methyltransferase H.